Reading from the N-terminus, the 181-residue chain is Isopentenyl-diphosphate Delta-isomerase (181 aa).

Mn(2+) is bound by residues H25 and H32. Residues 30–164 (PLHLAFSCWL…PWAFSPWMVM (135 aa)) form the Nudix hydrolase domain. The active site involves C67. H69 contributes to the Mn(2+) binding site. E87 is a Mg(2+) binding site. 2 residues coordinate Mn(2+): E114 and E116. The active site involves E116.

Belongs to the IPP isomerase type 1 family. As to quaternary structure, homodimer. It depends on Mg(2+) as a cofactor. Requires Mn(2+) as cofactor.

Its subcellular location is the cytoplasm. The enzyme catalyses isopentenyl diphosphate = dimethylallyl diphosphate. The protein operates within isoprenoid biosynthesis; dimethylallyl diphosphate biosynthesis; dimethylallyl diphosphate from isopentenyl diphosphate: step 1/1. Its function is as follows. Catalyzes the 1,3-allylic rearrangement of the homoallylic substrate isopentenyl (IPP) to its highly electrophilic allylic isomer, dimethylallyl diphosphate (DMAPP). This Salmonella agona (strain SL483) protein is Isopentenyl-diphosphate Delta-isomerase.